A 208-amino-acid chain; its full sequence is Outer-membrane lipoprotein carrier protein (208 aa).

A signal peptide spans 1–22 (MKKIFTIAALSLPLFCHLPAMA).

Belongs to the LolA family. Monomer.

It localises to the periplasm. Participates in the translocation of lipoproteins from the inner membrane to the outer membrane. Only forms a complex with a lipoprotein if the residue after the N-terminal Cys is not an aspartate (The Asp acts as a targeting signal to indicate that the lipoprotein should stay in the inner membrane). In Shewanella pealeana (strain ATCC 700345 / ANG-SQ1), this protein is Outer-membrane lipoprotein carrier protein.